A 475-amino-acid polypeptide reads, in one-letter code: UDP-N-acetylmuramate--L-alanine ligase (475 aa).

114-120 lines the ATP pocket; sequence GTHGKTT.

It belongs to the MurCDEF family.

The protein resides in the cytoplasm. It catalyses the reaction UDP-N-acetyl-alpha-D-muramate + L-alanine + ATP = UDP-N-acetyl-alpha-D-muramoyl-L-alanine + ADP + phosphate + H(+). The protein operates within cell wall biogenesis; peptidoglycan biosynthesis. Cell wall formation. The protein is UDP-N-acetylmuramate--L-alanine ligase of Bartonella quintana (strain Toulouse) (Rochalimaea quintana).